The sequence spans 701 residues: Polyribonucleotide nucleotidyltransferase (701 aa).

2 residues coordinate Mg(2+): Asp485 and Asp491. The KH domain maps to 552–611 (PKTQIMSINPDKIRDVIGAGGKVINKIIQDTGVKIDIKEDGTVFVSSTDHNGVNEAIKII). An S1 motif domain is found at 621–689 (GEVYLGKVTK…NQGRINLSRK (69 aa)).

This sequence belongs to the polyribonucleotide nucleotidyltransferase family. It depends on Mg(2+) as a cofactor.

The protein localises to the cytoplasm. The catalysed reaction is RNA(n+1) + phosphate = RNA(n) + a ribonucleoside 5'-diphosphate. In terms of biological role, involved in mRNA degradation. Catalyzes the phosphorolysis of single-stranded polyribonucleotides processively in the 3'- to 5'-direction. The chain is Polyribonucleotide nucleotidyltransferase from Clostridium beijerinckii (strain ATCC 51743 / NCIMB 8052) (Clostridium acetobutylicum).